A 94-amino-acid polypeptide reads, in one-letter code: Integration host factor subunit beta (94 aa).

It belongs to the bacterial histone-like protein family. Heterodimer of an alpha and a beta chain.

In terms of biological role, this protein is one of the two subunits of integration host factor, a specific DNA-binding protein that functions in genetic recombination as well as in transcriptional and translational control. This is Integration host factor subunit beta from Escherichia fergusonii (strain ATCC 35469 / DSM 13698 / CCUG 18766 / IAM 14443 / JCM 21226 / LMG 7866 / NBRC 102419 / NCTC 12128 / CDC 0568-73).